The sequence spans 2431 residues: Nucleoprotein TPR (2431 aa).

The disordered stretch occupies residues M1–P48. Residues A77–E87 form a sufficient for interaction with TPR region. Residues L88–K191 form a necessary for interaction with HSF1 region. A coiled-coil region spans residues K98–L444. K326, K386, and K419 each carry N6-acetyllysine. A Phosphoserine modification is found at S453. A coiled-coil region spans residues E486–V678. Residues K502, K531, and K551 each carry the N6-acetyllysine modification. The tract at residues L511–N587 is necessary for association to the NPC. Phosphoserine occurs at positions 596, 597, and 706. Residues S736 to T1246 are a coiled coil. Residues K787, K797, K822, and K829 each carry the N6-acetyllysine modification. The segment covering L989–G998 has biased composition (polar residues). Residues L989–L1011 form a disordered region. The span at P1002–L1011 shows a compositional bias: basic and acidic residues. S1259 bears the Phosphoserine mark. 2 coiled-coil regions span residues E1289–K1494 and V1547–E1700. The interval Q1292–M1394 is necessary for interaction with HSF1. The segment covering E1689 to P1701 has biased composition (basic and acidic residues). The segment at E1689–V1744 is disordered. The segment covering E1703–A1722 has biased composition (polar residues). N6-acetyllysine is present on K1760. T1762 is subject to Phosphothreonine. Residues S1873 to P1898 show a composition bias toward polar residues. The tract at residues S1873–H2193 is disordered. The tract at residues S1882–T1937 is sufficient and essential for mediating its nuclear import. Positions T1937 to A1951 are enriched in acidic residues. Over residues Q1954–S1963 the composition is skewed to polar residues. S1963 carries the phosphoserine modification. A compositionally biased stretch (low complexity) spans Q1994 to G2005. Composition is skewed to acidic residues over residues D2016–N2057 and D2067–E2088. Residues A2100 to E2132 show a composition bias toward polar residues. 5 positions are modified to phosphoserine: S2102, S2105, S2116, S2118, and S2141. 2 positions are modified to omega-N-methylarginine: R2174 and R2179. T2184 and T2205 each carry phosphothreonine. The residue at position 2223 (S2223) is a Phosphoserine. Position 2231 is an omega-N-methylarginine (R2231). Over residues E2295–V2312 the composition is skewed to polar residues. The segment at E2295–N2431 is disordered. Residues T2313 to T2325 are compositionally biased toward low complexity. A compositionally biased stretch (acidic residues) spans A2327–S2340. Over residues E2341 to I2351 the composition is skewed to low complexity. Over residues S2353–D2367 the composition is skewed to acidic residues. Residues L2368–P2388 show a composition bias toward low complexity. Residues R2411, R2413, and R2422 each carry the asymmetric dimethylarginine modification. The span at G2420–N2431 shows a compositional bias: gly residues.

This sequence belongs to the TPR family. As to quaternary structure, homodimer. Part of the nuclear pore complex (NPC). Associates with the XPO1/CRM1-mediated nuclear export complex, the Importin alpha/Importin beta receptor and the dynein 1 complex. Interacts (via C-terminal domain) with the KPNB1; the interaction occurs in a RanGTP-dependent manner. Interacts (via C-terminal region and phosphorylated form) with MAPK1/ERK2 (via phosphorylated form); the interaction requires dimerization of MAPK1/ERK2 and increases following EGF stimulation. Interacts with MAPK3/ERK1; the interaction increases following EGF stimulation. Interacts (via coiled coil region) with NUP153; the interaction is direct. Interacts with HSF1; the interaction increases in a stress-responsive manner and stimulates export of stress-induced HSP70 mRNA. Interacts with huntingtin/HTT; the interaction is inhibited by aggregated huntingtin/HTT forms with expanded polyglutamine stretch. Interacts with MAD1L1 (via N-terminal region), MAD2L1, and TTK; the interactions occurs in a microtubule-independent manner. Interacts (via middle region) with DYNLL1. Interacts with DCTN1, dynein, NUP153 and tubulin. Interacts with MTA1. Interacts with IFI204 (via C-terminal region). Interacts with IFI203. Interacts with ZC3HC1; this interaction mediates ZC3HC1 nuclear envelopes (NE)-association but also required for proper positioning of a substantial amount of TPR at the nuclear basket (NB). In terms of processing, phosphorylated. Phosphorylation occurs on serine and threonine residues (comprised in the C-terminal region) by MAPK1/ERK2 and stabilizes the interaction between these two proteins. In terms of tissue distribution, expressed in the heart, liver, kidney, spleen, lung and skeletal muscles.

It is found in the nucleus. The protein localises to the nucleus membrane. Its subcellular location is the nucleus envelope. The protein resides in the nuclear pore complex. It localises to the cytoplasm. It is found in the cytoskeleton. The protein localises to the spindle. Its subcellular location is the chromosome. The protein resides in the centromere. It localises to the kinetochore. Component of the nuclear pore complex (NPC), a complex required for the trafficking across the nuclear envelope. Functions as a scaffolding element in the nuclear phase of the NPC essential for normal nucleocytoplasmic transport of proteins and mRNAs, plays a role in the establishment of nuclear-peripheral chromatin compartmentalization in interphase, and in the mitotic spindle checkpoint signaling during mitosis. Involved in the quality control and retention of unspliced mRNAs in the nucleus; in association with NUP153, regulates the nuclear export of unspliced mRNA species bearing constitutive transport element (CTE) in a NXF1- and KHDRBS1-independent manner. Negatively regulates both the association of CTE-containing mRNA with large polyribosomes and translation initiation. Does not play any role in Rev response element (RRE)-mediated export of unspliced mRNAs. Implicated in nuclear export of mRNAs transcribed from heat shock gene promoters; associates both with chromatin in the HSP70 promoter and with mRNAs transcribed from this promoter under stress-induced conditions. Plays a limited role in the regulation of nuclear protein export. Modulates the nucleocytoplasmic transport of activated MAPK1/ERK2 and huntingtin/HTT and may serve as a docking site for the XPO1/CRM1-mediated nuclear export complex. Also plays a role as a structural and functional element of the perinuclear chromatin distribution; involved in the formation and/or maintenance of NPC-associated perinuclear heterochromatin exclusion zones (HEZs). Finally, acts as a spatial regulator of the spindle-assembly checkpoint (SAC) response ensuring a timely and effective recruitment of spindle checkpoint proteins like MAD1L1 and MAD2L1 to unattached kinetochore during the metaphase-anaphase transition before chromosome congression. Its N-terminus is involved in activation of oncogenic kinases. The chain is Nucleoprotein TPR from Mus musculus (Mouse).